The primary structure comprises 358 residues: Nicotinate-nucleotide--dimethylbenzimidazole phosphoribosyltransferase (358 aa).

The active-site Proton acceptor is the glutamate 323.

The protein belongs to the CobT family.

It carries out the reaction 5,6-dimethylbenzimidazole + nicotinate beta-D-ribonucleotide = alpha-ribazole 5'-phosphate + nicotinate + H(+). It participates in nucleoside biosynthesis; alpha-ribazole biosynthesis; alpha-ribazole from 5,6-dimethylbenzimidazole: step 1/2. In terms of biological role, catalyzes the synthesis of alpha-ribazole-5'-phosphate from nicotinate mononucleotide (NAMN) and 5,6-dimethylbenzimidazole (DMB). The protein is Nicotinate-nucleotide--dimethylbenzimidazole phosphoribosyltransferase of Oleidesulfovibrio alaskensis (strain ATCC BAA-1058 / DSM 17464 / G20) (Desulfovibrio alaskensis).